Consider the following 359-residue polypeptide: Chorismate synthase (359 aa).

Arg47 provides a ligand contact to NADP(+). Residues 123–125 (RSS), Gly283, 298–302 (KPTSS), and Arg326 contribute to the FMN site.

Belongs to the chorismate synthase family. As to quaternary structure, homotetramer. FMNH2 is required as a cofactor.

It carries out the reaction 5-O-(1-carboxyvinyl)-3-phosphoshikimate = chorismate + phosphate. The protein operates within metabolic intermediate biosynthesis; chorismate biosynthesis; chorismate from D-erythrose 4-phosphate and phosphoenolpyruvate: step 7/7. Its function is as follows. Catalyzes the anti-1,4-elimination of the C-3 phosphate and the C-6 proR hydrogen from 5-enolpyruvylshikimate-3-phosphate (EPSP) to yield chorismate, which is the branch point compound that serves as the starting substrate for the three terminal pathways of aromatic amino acid biosynthesis. This reaction introduces a second double bond into the aromatic ring system. This is Chorismate synthase from Chlamydia abortus (strain DSM 27085 / S26/3) (Chlamydophila abortus).